The chain runs to 180 residues: uncharacterized protein (180 aa).

A compositionally biased stretch (basic and acidic residues) spans D114 to D136. The interval D114–K180 is disordered. Residues N137–D146 are compositionally biased toward acidic residues. The span at N147–D173 shows a compositional bias: low complexity.

This is an uncharacterized protein from Acanthamoeba polyphaga (Amoeba).